The sequence spans 480 residues: Probable cobyric acid synthase (480 aa).

A GATase cobBQ-type domain is found at 246–431 (PVRIAVIRLP…MHGLFLNPSA (186 aa)). Residue Cys325 is the Nucleophile of the active site. His423 is an active-site residue.

This sequence belongs to the CobB/CobQ family. CobQ subfamily.

The protein operates within cofactor biosynthesis; adenosylcobalamin biosynthesis. In terms of biological role, catalyzes amidations at positions B, D, E, and G on adenosylcobyrinic A,C-diamide. NH(2) groups are provided by glutamine, and one molecule of ATP is hydrogenolyzed for each amidation. This is Probable cobyric acid synthase from Methanoregula boonei (strain DSM 21154 / JCM 14090 / 6A8).